The following is a 527-amino-acid chain: Light-independent protochlorophyllide reductase subunit B (527 aa).

Asp-36 serves as a coordination point for [4Fe-4S] cluster. Catalysis depends on Asp-290, which acts as the Proton donor. 425–426 (GL) contacts substrate.

The protein belongs to the ChlB/BchB/BchZ family. Protochlorophyllide reductase is composed of three subunits; ChlL, ChlN and ChlB. Forms a heterotetramer of two ChlB and two ChlN subunits. Requires [4Fe-4S] cluster as cofactor.

It catalyses the reaction chlorophyllide a + oxidized 2[4Fe-4S]-[ferredoxin] + 2 ADP + 2 phosphate = protochlorophyllide a + reduced 2[4Fe-4S]-[ferredoxin] + 2 ATP + 2 H2O. The protein operates within porphyrin-containing compound metabolism; chlorophyll biosynthesis (light-independent). In terms of biological role, component of the dark-operative protochlorophyllide reductase (DPOR) that uses Mg-ATP and reduced ferredoxin to reduce ring D of protochlorophyllide (Pchlide) to form chlorophyllide a (Chlide). This reaction is light-independent. The NB-protein (ChlN-ChlB) is the catalytic component of the complex. The polypeptide is Light-independent protochlorophyllide reductase subunit B (Synechococcus sp. (strain RCC307)).